The following is a 220-amino-acid chain: Vesicle-associated membrane protein 7 (220 aa).

Residues 2–188 (AILFAVVARG…ARAMCMKNLK (187 aa)) lie on the Cytoplasmic side of the membrane. Residues 7-110 (VVARGTTILA…AMNSEFSSVL (104 aa)) form the Longin domain. Residues 125 to 185 (QVAETQAQVD…RNLARAMCMK (61 aa)) enclose the v-SNARE coiled-coil homology domain. A helical; Anchor for type IV membrane protein transmembrane segment spans residues 189 to 209 (LTIIIIIVSIVIIYIIVSAAC). Residues 210 to 220 (GGLAWPSCVQK) lie on the Vesicular side of the membrane.

The protein belongs to the synaptobrevin family.

The protein resides in the cytoplasmic vesicle. Its subcellular location is the secretory vesicle membrane. It localises to the golgi apparatus. It is found in the trans-Golgi network membrane. The protein localises to the late endosome membrane. The protein resides in the lysosome membrane. Its subcellular location is the endoplasmic reticulum membrane. It localises to the phagosome membrane. It is found in the synapse. The protein localises to the synaptosome. Its function is as follows. Involved in the targeting and/or fusion of transport vesicles to their target membrane during transport of proteins from the early endosome to the lysosome. Required for heterotypic fusion of late endosomes with lysosomes and homotypic lysosomal fusion. Required for calcium regulated lysosomal exocytosis. Involved in the export of chylomicrons from the endoplasmic reticulum to the cis Golgi. Required for focal exocytosis of late endocytic vesicles during phagosome formation. This is Vesicle-associated membrane protein 7 from Gallus gallus (Chicken).